A 255-amino-acid chain; its full sequence is Developmental and secondary metabolism regulator MVE1 (255 aa).

One can recognise a Velvet domain in the interval 31–226; the sequence is GRKLTYRMSV…AEQGCRVRIR (196 aa). A Nuclear localization signal motif is present at residues 45–50; sequence VRARAC. Disordered regions lie at residues 163 to 184 and 229 to 255; these read CKSP…DAHV and VRMR…QARA. The span at 245–255 shows a compositional bias: acidic residues; the sequence is NYEDETAQARA.

Belongs to the velvet family. VeA subfamily. In terms of assembly, component of the heterotrimeric velvet complex composed of LAE1, MVE1 and VEL2; MVE1 acting as a bridging protein between LAE1 and VEL2.

It is found in the nucleus. The protein resides in the cytoplasm. Its function is as follows. Component of the velvet transcription factor complex that controls sexual/asexual developmental ratio in response to light, promoting sexual development in the darkness while stimulating asexual sporulation under illumination. The velvet complex hat acts as a global regulator for secondary metabolite gene expression. Controls the expression of the melanin gene cluster. Mediates the light-stimulated formation of aerial mycelia. The sequence is that of Developmental and secondary metabolism regulator MVE1 from Zymoseptoria tritici (strain CBS 115943 / IPO323) (Speckled leaf blotch fungus).